Here is a 329-residue protein sequence, read N- to C-terminus: Phospho-N-acetylmuramoyl-pentapeptide-transferase (329 aa).

A run of 9 helical transmembrane segments spans residues 1–21 (MLLNGIVAAVITMIITIIGIP), 53–73 (MGGFVFVVVSLVVSLVAALVF), 76–96 (FSPAFITAWWVFAMYAVIGFL), 109–129 (GLTAKQKMLAQILIGIVSYFI), 141–161 (ILSWQVNIGIFFSIFIIIWLV), 175–195 (GLASITVAISLTAYAVIAVVH), 198–218 (YDVLLIILSVIGGLLGFFVFN), 237–257 (FLAIVSILLHAEWTLLLIGAV), and 309–329 (IVFWLFTAVLSVIALCIYFAF).

Belongs to the glycosyltransferase 4 family. MraY subfamily. Mg(2+) is required as a cofactor.

Its subcellular location is the cell membrane. It carries out the reaction UDP-N-acetyl-alpha-D-muramoyl-L-alanyl-gamma-D-glutamyl-L-lysyl-D-alanyl-D-alanine + di-trans,octa-cis-undecaprenyl phosphate = Mur2Ac(oyl-L-Ala-gamma-D-Glu-L-Lys-D-Ala-D-Ala)-di-trans,octa-cis-undecaprenyl diphosphate + UMP. The protein operates within cell wall biogenesis; peptidoglycan biosynthesis. In terms of biological role, catalyzes the initial step of the lipid cycle reactions in the biosynthesis of the cell wall peptidoglycan: transfers peptidoglycan precursor phospho-MurNAc-pentapeptide from UDP-MurNAc-pentapeptide onto the lipid carrier undecaprenyl phosphate, yielding undecaprenyl-pyrophosphoryl-MurNAc-pentapeptide, known as lipid I. This is Phospho-N-acetylmuramoyl-pentapeptide-transferase from Lactococcus lactis subsp. cremoris (strain SK11).